Consider the following 331-residue polypeptide: Lipoyl synthase (331 aa).

[4Fe-4S] cluster contacts are provided by cysteine 60, cysteine 65, cysteine 71, cysteine 86, cysteine 90, cysteine 93, and serine 301. In terms of domain architecture, Radical SAM core spans 72–290 (WSRGTATFML…REEGMQLGFL (219 aa)).

The protein belongs to the radical SAM superfamily. Lipoyl synthase family. The cofactor is [4Fe-4S] cluster.

Its subcellular location is the cytoplasm. The enzyme catalyses [[Fe-S] cluster scaffold protein carrying a second [4Fe-4S](2+) cluster] + N(6)-octanoyl-L-lysyl-[protein] + 2 oxidized [2Fe-2S]-[ferredoxin] + 2 S-adenosyl-L-methionine + 4 H(+) = [[Fe-S] cluster scaffold protein] + N(6)-[(R)-dihydrolipoyl]-L-lysyl-[protein] + 4 Fe(3+) + 2 hydrogen sulfide + 2 5'-deoxyadenosine + 2 L-methionine + 2 reduced [2Fe-2S]-[ferredoxin]. It participates in protein modification; protein lipoylation via endogenous pathway; protein N(6)-(lipoyl)lysine from octanoyl-[acyl-carrier-protein]: step 2/2. Its function is as follows. Catalyzes the radical-mediated insertion of two sulfur atoms into the C-6 and C-8 positions of the octanoyl moiety bound to the lipoyl domains of lipoate-dependent enzymes, thereby converting the octanoylated domains into lipoylated derivatives. The polypeptide is Lipoyl synthase (Deinococcus radiodurans (strain ATCC 13939 / DSM 20539 / JCM 16871 / CCUG 27074 / LMG 4051 / NBRC 15346 / NCIMB 9279 / VKM B-1422 / R1)).